The sequence spans 1175 residues: Double-stranded RNA-specific adenosine deaminase (1175 aa).

Arg-30 and Arg-42 each carry asymmetric dimethylarginine. Positions 135–201 constitute a Z-binding 1 domain; the sequence is LSISQNPEQK…GKPPLWSLVP (67 aa). An interaction with Z-DNA region spans residues 135–204; the sequence is LSISQNPEQK…PLWSLVPLSQ (70 aa). The interval 207–239 is disordered; sequence TQPPRAVNSDKEVPRGEPDLDSEDGDPASDLEG. Residues 214–224 show a composition bias toward basic and acidic residues; the sequence is NSDKEVPRGEP. Residues 225-235 show a composition bias toward acidic residues; the sequence is DLDSEDGDPAS. 2 positions are modified to phosphoserine: Ser-228 and Ser-235. The Z-binding 2 domain maps to 243-307; that stretch reads LLDMAEIKEK…ATPPIWYLTD (65 aa). Positions 315–384 are disordered; sequence MKRSTHSGPA…ARPGPVRLRP (70 aa). The segment covering 357–376 has biased composition (basic and acidic residues); that stretch reads KRVENGQEPVTKYESRHEAR. Lys-368 is covalently cross-linked (Glycyl lysine isopeptide (Lys-Gly) (interchain with G-Cter in SUMO); alternate). A Glycyl lysine isopeptide (Lys-Gly) (interchain with G-Cter in SUMO1); alternate cross-link involves residue Lys-368. Lys-368 participates in a covalent cross-link: Glycyl lysine isopeptide (Lys-Gly) (interchain with G-Cter in SUMO2); alternate. Ser-431 carries the post-translational modification Phosphoserine. Residues 453–521 form the DRBM 1 domain; sequence NPVSGLLEYA…AVKAMAILLR (69 aa). The interval 524–561 is disordered; sequence KAKDSGQPEELSNCPMEEDPEKPAESQPPSSSATSLFS. Over residues 550–561 the composition is skewed to polar residues; it reads QPPSSSATSLFS. 3 positions are modified to phosphoserine: Ser-564, Ser-579, and Ser-586. Positions 564–632 constitute a DRBM 2 domain; the sequence is SPVTTLLECM…AEEAMKALQE (69 aa). The disordered stretch occupies residues 632-652; the sequence is EEAANSADDQSGGANTDSLDE. A compositionally biased stretch (polar residues) spans 638–648; sequence ADDQSGGANTD. An N-terminal extension of DRBM 3 and constituent of a bi-partite nuclear localization signal region spans residues 662–671; it reads IGELVRYLNT. Residues 672–740 form the DRBM 3 domain; it reads NPVGGLLEYA…ADAALRVLIG (69 aa). The segment at 741–747 is C-terminal extension of DRBM 3 and constituent of a bi-partite nuclear localization signal; sequence ESEKAEQ. Thr-754 carries the phosphothreonine modification. 3 positions are modified to phosphoserine: Ser-760, Ser-769, and Ser-771. Lys-821 participates in a covalent cross-link: Glycyl lysine isopeptide (Lys-Gly) (interchain with G-Cter in SUMO2). The A to I editase domain maps to 832–1167; that stretch reads SLGTGNRCVK…ISKPQEEKNF (336 aa). His-856 lines the Zn(2+) pocket. The Proton donor role is filled by Glu-858. Zn(2+) contacts are provided by Cys-912 and Cys-982.

In terms of assembly, homodimer. Homodimerization is essential for its catalytic activity. Isoform 5 can form heterodimers with ADARB1/ADAR2. Isoform 1 interacts with ILF2/NF45 and ILF3/NF90. Binding to ILF3/NF90 up-regulates ILF3-mediated gene expression. Isoform 1 and isoform 5 (via DRBM 3 domain) interact with TNPO1. Isoform 5 (via DRBM domains) interacts with XPO5. Isoform 1 and isoform 5 can interact with EIF2AK2/PKR and UPF1. Sumoylation reduces RNA-editing activity. As to expression, detected in brain.

It is found in the cytoplasm. The protein localises to the nucleus. The enzyme catalyses adenosine in double-stranded RNA + H2O + H(+) = inosine in double-stranded RNA + NH4(+). Catalyzes the hydrolytic deamination of adenosine to inosine in double-stranded RNA (dsRNA) referred to as A-to-I RNA editing. This may affect gene expression and function in a number of ways that include mRNA translation by changing codons and hence the amino acid sequence of proteins; pre-mRNA splicing by altering splice site recognition sequences; RNA stability by changing sequences involved in nuclease recognition; genetic stability in the case of RNA virus genomes by changing sequences during viral RNA replication; and RNA structure-dependent activities such as microRNA production or targeting or protein-RNA interactions. Can edit both viral and cellular RNAs and can edit RNAs at multiple sites (hyper-editing) or at specific sites (site-specific editing). Its cellular RNA substrates include: bladder cancer-associated protein (BLCAP), neurotransmitter receptors for glutamate (GRIA2) and serotonin (HTR2C) and GABA receptor (GABRA3). Site-specific RNA editing of transcripts encoding these proteins results in amino acid substitutions which consequently alters their functional activities. Exhibits low-level editing at the GRIA2 Q/R site, but edits efficiently at the R/G site and HOTSPOT1. Does not affect polyomavirus replication but provides protection against virus-induced cytopathic effects. Essential for embryonic development and cell survival and plays a critical role in the maintenance of hematopoietic stem cells. The protein is Double-stranded RNA-specific adenosine deaminase (Adar) of Rattus norvegicus (Rat).